A 316-amino-acid chain; its full sequence is Acetyl-coenzyme A carboxylase carboxyl transferase subunit alpha (316 aa).

A CoA carboxyltransferase C-terminal domain is found at 39–293 (KLEEKNAQLT…KKHLQANLTN (255 aa)).

It belongs to the AccA family. As to quaternary structure, acetyl-CoA carboxylase is a heterohexamer composed of biotin carboxyl carrier protein (AccB), biotin carboxylase (AccC) and two subunits each of ACCase subunit alpha (AccA) and ACCase subunit beta (AccD).

The protein resides in the cytoplasm. The catalysed reaction is N(6)-carboxybiotinyl-L-lysyl-[protein] + acetyl-CoA = N(6)-biotinyl-L-lysyl-[protein] + malonyl-CoA. Its pathway is lipid metabolism; malonyl-CoA biosynthesis; malonyl-CoA from acetyl-CoA: step 1/1. Functionally, component of the acetyl coenzyme A carboxylase (ACC) complex. First, biotin carboxylase catalyzes the carboxylation of biotin on its carrier protein (BCCP) and then the CO(2) group is transferred by the carboxyltransferase to acetyl-CoA to form malonyl-CoA. In Coxiella burnetii (strain CbuK_Q154) (Coxiella burnetii (strain Q154)), this protein is Acetyl-coenzyme A carboxylase carboxyl transferase subunit alpha.